The primary structure comprises 294 residues: Farnesyl diphosphate synthase (294 aa).

Isopentenyl diphosphate contacts are provided by lysine 45, arginine 48, and histidine 77. Aspartate 84 and aspartate 90 together coordinate Mg(2+). Residue arginine 95 coordinates (2E)-geranyl diphosphate. Isopentenyl diphosphate is bound at residue arginine 96. Positions 181, 182, and 220 each coordinate (2E)-geranyl diphosphate.

The protein belongs to the FPP/GGPP synthase family. Mg(2+) is required as a cofactor.

Its subcellular location is the cytoplasm. The catalysed reaction is isopentenyl diphosphate + (2E)-geranyl diphosphate = (2E,6E)-farnesyl diphosphate + diphosphate. The chain is Farnesyl diphosphate synthase (ispA) from Buchnera aphidicola subsp. Schizaphis graminum (strain Sg).